The primary structure comprises 43 residues: Alpha-1-antiproteinase 4 (43 aa).

It belongs to the serpin family. N-glycosylated with carbohydrates having biantennary side chains. In terms of tissue distribution, plasma.

It is found in the secreted. The chain is Alpha-1-antiproteinase 4 from Equus caballus (Horse).